The sequence spans 615 residues: Protease 4 (615 aa).

Residues Met1 to Asp17 are Cytoplasmic-facing. A helical membrane pass occupies residues Leu18–Ser38. The Periplasmic segment spans residues Ser39–Lys615. Lys201 functions as the Proton donor/acceptor in the catalytic mechanism. Ser405 functions as the Nucleophile in the catalytic mechanism.

This sequence belongs to the peptidase S49 family. Homotetramer.

It localises to the cell inner membrane. Digests cleaved signal peptides in vitro, its in vivo function is unknown. This activity is necessary to maintain proper secretion of mature proteins across the membrane. The polypeptide is Protease 4 (sppA) (Haemophilus influenzae (strain ATCC 51907 / DSM 11121 / KW20 / Rd)).